Reading from the N-terminus, the 932-residue chain is Protocadherin gamma-A9 (932 aa).

Positions 1 to 28 are cleaved as a signal peptide; sequence MAAPTKCQLRGRLVLLCSLLGMLWEARA. 6 Cadherin domains span residues 29–133, 134–242, 243–347, 348–452, 453–562, and 570–683; these read SQIR…APKF, QAES…APVF, AQRI…RPEV, TITS…PPAF, SQAS…APEI, and DGST…IPAD. At 29-692 the chain is on the extracellular side; it reads SQIRYSVPEE…DLEASDLTLY (664 aa). Asn-47 and Asn-127 each carry an N-linked (GlcNAc...) asparagine glycan. 3 N-linked (GlcNAc...) asparagine glycosylation sites follow: Asn-389, Asn-419, and Asn-545. Residues 693–713 traverse the membrane as a helical segment; that stretch reads LVVAVAVVSCVFLTFVITLLA. Residues 714–932 are Cytoplasmic-facing; it reads LRLRHWHSSH…KKKSGKKEKK (219 aa). Disordered stretches follow at residues 803–841 and 902–932; these read DTPLVPQAPPNTDWRFSQAQRPGTSGSQNGDDTGTWPNN and ATLTNAAGKRDGKAPAGGNGNKKKSGKKEKK. Polar residues predominate over residues 816 to 841; the sequence is WRFSQAQRPGTSGSQNGDDTGTWPNN. Basic residues predominate over residues 922–932; it reads NKKKSGKKEKK.

It is found in the cell membrane. Potential calcium-dependent cell-adhesion protein. May be involved in the establishment and maintenance of specific neuronal connections in the brain. This Homo sapiens (Human) protein is Protocadherin gamma-A9 (PCDHGA9).